A 76-amino-acid chain; its full sequence is Protein CASC2, isoforms 1/2 (76 aa).

The interval 1–20 (MAGTRGLMLLGPGPVAGPRD) is disordered.

In Homo sapiens (Human), this protein is Protein CASC2, isoforms 1/2 (CASC2).